The primary structure comprises 457 residues: Glutamate--tRNA ligase 2 (457 aa).

Residues proline 9–asparagine 19 carry the 'HIGH' region motif. The 'KMSKS' region signature appears at glycine 250–arginine 254. Lysine 253 serves as a coordination point for ATP.

It belongs to the class-I aminoacyl-tRNA synthetase family. Glutamate--tRNA ligase type 1 subfamily. As to quaternary structure, monomer.

The protein resides in the cytoplasm. It carries out the reaction tRNA(Glu) + L-glutamate + ATP = L-glutamyl-tRNA(Glu) + AMP + diphosphate. Catalyzes the attachment of glutamate to tRNA(Glu) in a two-step reaction: glutamate is first activated by ATP to form Glu-AMP and then transferred to the acceptor end of tRNA(Glu). The chain is Glutamate--tRNA ligase 2 from Brucella melitensis biotype 1 (strain ATCC 23456 / CCUG 17765 / NCTC 10094 / 16M).